Here is a 271-residue protein sequence, read N- to C-terminus: Ribosomal RNA small subunit methyltransferase A (271 aa).

S-adenosyl-L-methionine contacts are provided by H11, L13, G38, E59, D84, and N109.

Belongs to the class I-like SAM-binding methyltransferase superfamily. rRNA adenine N(6)-methyltransferase family. RsmA subfamily.

Its subcellular location is the cytoplasm. The catalysed reaction is adenosine(1518)/adenosine(1519) in 16S rRNA + 4 S-adenosyl-L-methionine = N(6)-dimethyladenosine(1518)/N(6)-dimethyladenosine(1519) in 16S rRNA + 4 S-adenosyl-L-homocysteine + 4 H(+). Specifically dimethylates two adjacent adenosines (A1518 and A1519) in the loop of a conserved hairpin near the 3'-end of 16S rRNA in the 30S particle. May play a critical role in biogenesis of 30S subunits. The polypeptide is Ribosomal RNA small subunit methyltransferase A (Trichormus variabilis (strain ATCC 29413 / PCC 7937) (Anabaena variabilis)).